A 147-amino-acid chain; its full sequence is Putative nickel-responsive regulator (147 aa).

4 residues coordinate Ni(2+): histidine 76, histidine 87, histidine 89, and cysteine 95.

Belongs to the transcriptional regulatory CopG/NikR family. Requires Ni(2+) as cofactor.

Functionally, transcriptional regulator. This is Putative nickel-responsive regulator from Rhodopseudomonas palustris (strain TIE-1).